The primary structure comprises 321 residues: Tetraacyldisaccharide 4'-kinase (321 aa).

ATP is bound at residue 54–61 (SVGGTGKT).

This sequence belongs to the LpxK family.

It carries out the reaction a lipid A disaccharide + ATP = a lipid IVA + ADP + H(+). Its pathway is glycolipid biosynthesis; lipid IV(A) biosynthesis; lipid IV(A) from (3R)-3-hydroxytetradecanoyl-[acyl-carrier-protein] and UDP-N-acetyl-alpha-D-glucosamine: step 6/6. In terms of biological role, transfers the gamma-phosphate of ATP to the 4'-position of a tetraacyldisaccharide 1-phosphate intermediate (termed DS-1-P) to form tetraacyldisaccharide 1,4'-bis-phosphate (lipid IVA). The polypeptide is Tetraacyldisaccharide 4'-kinase (Rickettsia bellii (strain OSU 85-389)).